A 391-amino-acid polypeptide reads, in one-letter code: E1B 55 kDa protein (391 aa).

Residue Ser387 is modified to Phosphoserine.

It belongs to the adenoviridae E1B 55 kDa protein family. As to quaternary structure, interacts with host PML-4 and PML-5; this interaction promotes efficient subnuclear targeting of E1B-55K to PML nuclear bodies. Interacts with E4-ORF3 protein. Interacts with E4-ORF6 protein.

The protein localises to the host nucleus. Its subcellular location is the host cytoplasm. Its function is as follows. Plays a major role to prevent cellular inhibition of viral genome replication. Assembles an SCF-like E3 ubiquitin ligase complex based on the cellular proteins ELOB, ELOC, CUL5 and RBX1, in cooperation with viral E4orf6. This viral RING-type ligase ubiquitinates cellular substrates and targets them to proteasomal degradation: TP53/p53, LIG4, MRE11-RAD50-NBS1 (MRN) complex, ITGA3, DAXX and BLM. E1B-55K probably acts as the substrate-specific adapter of the SCF-like E3 ubiquitin ligase complex. Degradation of host TP53/p53 activity is essential for preventing E1A-induced TP53 accumulation that would otherwise lead to cell apoptosis and growth arrest. E1B-55K also inactivates TP53 transcription-factor activity by binding its transactivation domain. E1B-55K also functions as a SUMO1 E3 ligase for TP53 which causes the latter to be sequestered in promyelocytic leukemia (PML) nuclear bodies thereby contributing to maximal inhibition of TP53 function. This is E1B 55 kDa protein from Tree shrew adenovirus serotype 1 (TSAdV-1).